Reading from the N-terminus, the 260-residue chain is Deoxyribonuclease-1 (260 aa).

A glycan (N-linked (GlcNAc...) asparagine) is linked at N18. Residue E78 is part of the active site. C101 and C104 are disulfide-bonded. The active site involves H134. A disulfide bridge links C173 with C209.

This sequence belongs to the DNase I family. Ca(2+) serves as cofactor. It depends on Mg(2+) as a cofactor.

The protein localises to the secreted. The protein resides in the zymogen granule. Its subcellular location is the nucleus envelope. It catalyses the reaction Endonucleolytic cleavage to 5'-phosphodinucleotide and 5'-phosphooligonucleotide end-products.. Its function is as follows. Serum endocuclease secreted into body fluids by a wide variety of exocrine and endocrine organs. Expressed by non-hematopoietic tissues and preferentially cleaves protein-free DNA. Among other functions, seems to be involved in cell death by apoptosis. Binds specifically to G-actin and blocks actin polymerization. Together with DNASE1L3, plays a key role in degrading neutrophil extracellular traps (NETs). NETs are mainly composed of DNA fibers and are released by neutrophils to bind pathogens during inflammation. Degradation of intravascular NETs by DNASE1 and DNASE1L3 is required to prevent formation of clots that obstruct blood vessels and cause organ damage following inflammation. The polypeptide is Deoxyribonuclease-1 (DNASE1) (Ovis aries (Sheep)).